The following is a 204-amino-acid chain: Tumor protein D53 (204 aa).

The interval 1 to 20 (MEAQAQGLLETEPLQGTDED) is disordered. Residues 22–73 (VASADFSSMLSEEEKEELKAELVQLEDEITTLRQVLSAKERHLVEIKQKLGM) adopt a coiled-coil conformation. Phosphoserine is present on residues Ser29, Ser86, Ser122, and Ser131. Arg133 bears the Omega-N-methylarginine mark. Thr146 carries the post-translational modification Phosphothreonine. Phosphoserine occurs at positions 149 and 174.

It belongs to the TPD52 family. Forms a homodimer or heterodimer with other members of the family.

The chain is Tumor protein D53 (TPD52L1) from Homo sapiens (Human).